The chain runs to 203 residues: bMERB domain-containing protein 1 (203 aa).

The 147-residue stretch at 3–149 folds into the bMERB domain; sequence LKQSLSVHLE…EQEEDKEMAD (147 aa). A disordered region spans residues 161 to 184; that stretch reads VTKTSASSRAEKKAEPPPSKPTVA.

This Mus musculus (Mouse) protein is bMERB domain-containing protein 1 (Bmerb1).